The following is a 604-amino-acid chain: Prostaglandin G/H synthase 2 (604 aa).

An N-terminal signal peptide occupies residues 1-17 (MLARALLLCAAVALSHA). One can recognise an EGF-like domain in the interval 18-55 (ANPCCSNPCQNRGVCMTMGFDQYKCDCTRTGFYGENCS). Intrachain disulfides connect C21-C32, C22-C145, C26-C42, and C44-C54. N53 carries N-linked (GlcNAc...) asparagine glycosylation. R106 is a binding site for substrate. An N-linked (GlcNAc...) asparagine glycan is attached at N130. The active-site Proton acceptor is H193. Residue Y341 coordinates substrate. The For cyclooxygenase activity role is filled by Y371. H374 lines the heme b pocket. An N-linked (GlcNAc...) asparagine glycan is attached at N396. S-nitrosocysteine is present on C526. Residues C555 and C561 are joined by a disulfide bond. S565 bears the O-acetylserine mark. A glycan (N-linked (GlcNAc...) asparagine) is linked at N580.

The protein belongs to the prostaglandin G/H synthase family. Homodimer. Requires heme b as cofactor. In terms of processing, S-nitrosylation by NOS2 (iNOS) activates enzyme activity. S-nitrosylation may take place on different Cys residues in addition to Cys-526. Post-translationally, acetylated at Ser-565 by SPHK1. During neuroinflammation, acetylation by SPHK1 promotes neuronal secretion of specialized preresolving mediators (SPMs), especially 15-R-lipoxin A4, which results in an increase of phagocytic microglia. In terms of tissue distribution, highest expression in kidney and urinary bladder.

The protein resides in the microsome membrane. It localises to the endoplasmic reticulum membrane. It is found in the nucleus inner membrane. The protein localises to the nucleus outer membrane. It carries out the reaction (5Z,8Z,11Z,14Z)-eicosatetraenoate + AH2 + 2 O2 = prostaglandin H2 + A + H2O. It catalyses the reaction (5Z,8Z,11Z,14Z)-eicosatetraenoate + 2 O2 = prostaglandin G2. The catalysed reaction is prostaglandin G2 + AH2 = prostaglandin H2 + A + H2O. The enzyme catalyses (5Z,8Z,11Z,14Z,17Z)-eicosapentaenoate + 2 O2 = prostaglandin G3. It carries out the reaction prostaglandin G3 + AH2 = prostaglandin H3 + A + H2O. It catalyses the reaction (8Z,11Z,14Z)-eicosatrienoate + 2 O2 = prostaglandin G1. The catalysed reaction is prostaglandin G1 + AH2 = prostaglandin H1 + A + H2O. The enzyme catalyses 2-(5Z,8Z,11Z,14Z)-eicosatetraenoyl-sn-glycero-3-phosphoethanolamine + 2 O2 = 2-(prostaglandin G2)-sn-glycero-3-phosphoethanolamine. It carries out the reaction 2-(prostaglandin G2)-sn-glycero-3-phosphoethanolamine + AH2 = 2-(prostaglandin H2)-sn-glycero-3-phosphoethanolamine + A + H2O. It catalyses the reaction 2-(5Z,8Z,11Z,14Z)-eicosatetraenoyl-sn-glycero-3-phosphocholine + 2 O2 = 2-(prostaglandin G2)-sn-glycero-3-phosphocholine. The catalysed reaction is 2-(prostaglandin G2)-sn-glycero-3-phosphocholine + AH2 = 2-(prostaglandin H2)-sn-glycero-3-phosphocholine + A + H2O. The enzyme catalyses (15S)-hydroperoxy-(5Z,8Z,11Z,13E)-eicosatetraenoate + AH2 = (15S)-hydroxy-(5Z,8Z,11Z,13E)-eicosatetraenoate + A + H2O. It carries out the reaction 2-(5Z,8Z,11Z,14Z)-eicosatetraenoyl-sn-glycero-3-phosphocholine + AH2 + O2 = 2-[(15S)-hydroxy-(5Z,8Z,11Z,13E)-eicosatetraenoyl]-sn-glycero-3-phosphocholine + A + H2O. It catalyses the reaction 2-(5Z,8Z,11Z,14Z)-eicosatetraenoyl-sn-glycero-3-phosphocholine + AH2 + O2 = 2-[(15R)-hydroxy-(5Z,8Z,11Z,13E)-eicosatetraenoyl]-sn-glycero-3-phosphocholine + A + H2O. The catalysed reaction is 2-(5Z,8Z,11Z,14Z)-eicosatetraenoyl-sn-glycero-3-phosphocholine + AH2 + O2 = 2-[(11R)-hydroxy-(5Z,8Z,12E,14Z)-eicosatetraenoyl]-sn-glycero-3-phosphocholine + A + H2O. The enzyme catalyses (9Z,12Z)-octadecadienoate + AH2 + O2 = 9-hydroxy-(10E,12Z)-octadecadienoate + A + H2O. It carries out the reaction (9Z,12Z)-octadecadienoate + AH2 + O2 = 13-hydroxy-(9Z,11E)-octadecadienoate + A + H2O. It catalyses the reaction (5Z,8Z,11Z,14Z)-eicosatetraenoate + AH2 + O2 = (15R)-hydroxy-(5Z,8Z,11Z,13E)-eicosatetraenoate + A + H2O. The catalysed reaction is (5Z,8Z,11Z,14Z)-eicosatetraenoate + AH2 + O2 = (11R)-hydroxy-(5Z,8Z,12E,14Z)-eicosatetraenoate + A + H2O. The enzyme catalyses (5Z,8Z,11Z,14Z,17Z)-eicosapentaenoate + AH2 + O2 = (11R)-hydroxy-(5Z,8Z,12E,14Z,17Z)-eicosapentaenoate + A + H2O. It carries out the reaction (5Z,8Z,11Z,14Z,17Z)-eicosapentaenoate + AH2 + O2 = (18S)-hydroxy-(5Z,8Z,11Z,14Z,16E)-eicosapentaenoate + A + H2O. It catalyses the reaction (5Z,8Z,11Z,14Z,17Z)-eicosapentaenoate + AH2 + O2 = (18R)-hydroxy-(5Z,8Z,11Z,14Z,16E)-eicosapentaenoate + A + H2O. The catalysed reaction is (5Z,8Z,11Z,14Z,17Z)-eicosapentaenoate + AH2 + O2 = (15R)-hydroxy-(5Z,8Z,11Z,13E,17Z)-eicosapentaenoate + A + H2O. The enzyme catalyses (5Z,8Z,11Z,14Z,17Z)-eicosapentaenoate + AH2 + O2 = (15S)-hydroxy-(5Z,8Z,11Z,13E,17Z)-eicosapentaenoate + A + H2O. It carries out the reaction (7Z,10Z,13Z,16Z,19Z)-docosapentaenoate + AH2 + O2 = 13R-hydroxy-(7Z,10Z,14E,16Z,19Z)-docosapentaenoate + A + H2O. It catalyses the reaction (4Z,7Z,10Z,13Z,16Z,19Z)-docosahexaenoate + AH2 + O2 = 13-hydroxy-(4Z,7Z,10Z,14E,16Z,19Z)-docosahexaenoate + A + H2O. The catalysed reaction is (5S)-hydroxy-(6E,8Z,11Z,14Z)-eicosatetraenoate + AH2 + O2 = (5S,15R)-dihydroxy-(6E,8Z,11Z,13E)-eicosatetraenoate + A + H2O. The enzyme catalyses (4Z,7Z,10Z,13Z,16Z,19Z)-docosahexaenoate + AH2 + O2 = 17R-hydroxy-(4Z,7Z,10Z,13Z,15E,19Z)-docosahexaenoate + A + H2O. It carries out the reaction (5S)-hydroxy-(6E,8Z,11Z,14Z)-eicosatetraenoate + AH2 + O2 = (5S,15S)-dihydroxy-(6E,8Z,11Z,13E)-eicosatetraenoate + A + H2O. It catalyses the reaction (5S)-hydroxy-(6E,8Z,11Z,14Z)-eicosatetraenoate + AH2 + O2 = (5S,11R)-dihydroxy-(6E,8Z,12E,14Z)-eicosatetraenoate + A + H2O. The catalysed reaction is 2-(5Z,8Z,11Z,14Z-eicosatetraenoyl)-glycerol + 2 O2 = 2-glyceryl-prostaglandin G2. The enzyme catalyses 2-glyceryl-prostaglandin G2 + AH2 = 2-glyceryl-prostaglandin H2 + A + H2O. It carries out the reaction (5Z,8Z,11Z,14Z)-eicosatetraenoate + O2 = (15R)-hydroperoxy-(5Z,8Z,11Z,13E)-eicosatetraenoate. It catalyses the reaction (5Z,8Z,11Z,14Z)-eicosatetraenoate + O2 = 11R-hydroperoxy-(5Z,8Z,12E,14Z)-eicosatetraenoate. The catalysed reaction is (9Z,12Z)-octadecadienoate + AH2 + O2 = (9R)-hydroxy-(10E,12Z)-octadecadienoate + A + H2O. The enzyme catalyses (9Z,12Z)-octadecadienoate + AH2 + O2 = (9S)-hydroxy-(10E,12Z)-octadecadienoate + A + H2O. It carries out the reaction (9Z,12Z)-octadecadienoate + AH2 + O2 = (13S)-hydroxy-(9Z,11E)-octadecadienoate + A + H2O. It catalyses the reaction (9Z,12Z)-octadecadienoate + AH2 + O2 = (13R)-hydroxy-(9Z,11E)-octadecadienoate + A + H2O. It functions in the pathway lipid metabolism; prostaglandin biosynthesis. Dual cyclooxygenase and peroxidase in the biosynthesis pathway of prostanoids, a class of C20 oxylipins mainly derived from arachidonate ((5Z,8Z,11Z,14Z)-eicosatetraenoate, AA, C20:4(n-6)), with a particular role in the inflammatory response. The cyclooxygenase activity oxygenates AA to the hydroperoxy endoperoxide prostaglandin G2 (PGG2), and the peroxidase activity reduces PGG2 to the hydroxy endoperoxide prostaglandin H2 (PGH2), the precursor of all 2-series prostaglandins and thromboxanes. This complex transformation is initiated by abstraction of hydrogen at carbon 13 (with S-stereochemistry), followed by insertion of molecular O2 to form the endoperoxide bridge between carbon 9 and 11 that defines prostaglandins. The insertion of a second molecule of O2 (bis-oxygenase activity) yields a hydroperoxy group in PGG2 that is then reduced to PGH2 by two electrons. Similarly catalyzes successive cyclooxygenation and peroxidation of dihomo-gamma-linoleate (DGLA, C20:3(n-6)) and eicosapentaenoate (EPA, C20:5(n-3)) to corresponding PGH1 and PGH3, the precursors of 1- and 3-series prostaglandins. In an alternative pathway of prostanoid biosynthesis, converts 2-arachidonoyl lysophopholipids to prostanoid lysophopholipids, which are then hydrolyzed by intracellular phospholipases to release free prostanoids. Metabolizes 2-arachidonoyl glycerol yielding the glyceryl ester of PGH2, a process that can contribute to pain response. Generates lipid mediators from n-3 and n-6 polyunsaturated fatty acids (PUFAs) via a lipoxygenase-type mechanism. Oxygenates PUFAs to hydroperoxy compounds and then reduces them to corresponding alcohols. Plays a role in the generation of resolution phase interaction products (resolvins) during both sterile and infectious inflammation. Metabolizes docosahexaenoate (DHA, C22:6(n-3)) to 17R-HDHA, a precursor of the D-series resolvins (RvDs). As a component of the biosynthetic pathway of E-series resolvins (RvEs), converts eicosapentaenoate (EPA, C20:5(n-3)) primarily to 18S-HEPE that is further metabolized by ALOX5 and LTA4H to generate 18S-RvE1 and 18S-RvE2. In vascular endothelial cells, converts docosapentaenoate (DPA, C22:5(n-3)) to 13R-HDPA, a precursor for 13-series resolvins (RvTs) shown to activate macrophage phagocytosis during bacterial infection. In activated leukocytes, contributes to oxygenation of hydroxyeicosatetraenoates (HETE) to diHETES (5,15-diHETE and 5,11-diHETE). Can also use linoleate (LA, (9Z,12Z)-octadecadienoate, C18:2(n-6)) as substrate and produce hydroxyoctadecadienoates (HODEs) in a regio- and stereospecific manner,being (9R)-HODE ((9R)-hydroxy-(10E,12Z)-octadecadienoate) and (13S)-HODE ((13S)-hydroxy-(9Z,11E)-octadecadienoate) its major products. During neuroinflammation, plays a role in neuronal secretion of specialized preresolving mediators (SPMs) 15R-lipoxin A4 that regulates phagocytic microglia. The sequence is that of Prostaglandin G/H synthase 2 (PTGS2) from Oryctolagus cuniculus (Rabbit).